The chain runs to 83 residues: Exodeoxyribonuclease 7 small subunit (83 aa).

Belongs to the XseB family. Heterooligomer composed of large and small subunits.

The protein resides in the cytoplasm. It carries out the reaction Exonucleolytic cleavage in either 5'- to 3'- or 3'- to 5'-direction to yield nucleoside 5'-phosphates.. Functionally, bidirectionally degrades single-stranded DNA into large acid-insoluble oligonucleotides, which are then degraded further into small acid-soluble oligonucleotides. The protein is Exodeoxyribonuclease 7 small subunit of Nitrobacter hamburgensis (strain DSM 10229 / NCIMB 13809 / X14).